The sequence spans 640 residues: Threonine--tRNA ligase (640 aa).

A catalytic region spans residues 224 to 525 (DHRKLGKELD…LTEHYAGAFP (302 aa)). Zn(2+)-binding residues include cysteine 323, histidine 374, and histidine 502.

The protein belongs to the class-II aminoacyl-tRNA synthetase family. As to quaternary structure, homodimer. It depends on Zn(2+) as a cofactor.

Its subcellular location is the cytoplasm. It catalyses the reaction tRNA(Thr) + L-threonine + ATP = L-threonyl-tRNA(Thr) + AMP + diphosphate + H(+). In terms of biological role, catalyzes the attachment of threonine to tRNA(Thr) in a two-step reaction: L-threonine is first activated by ATP to form Thr-AMP and then transferred to the acceptor end of tRNA(Thr). Also edits incorrectly charged L-seryl-tRNA(Thr). This is Threonine--tRNA ligase from Tropheryma whipplei (strain Twist) (Whipple's bacillus).